Reading from the N-terminus, the 359-residue chain is Magnesium transporter NIPA2 (359 aa).

At 1–9 (MSLGRGKYD) the chain is on the extracellular side. Residues 10–30 (FYIGLGLAMTSSIFIGGSFIL) traverse the membrane as a helical segment. The Cytoplasmic portion of the chain corresponds to 31–56 (KKKGLLRLARKGSMRAGQGGHAYLKE). Residues 57–77 (WLWWAGLLSMGAGEVANFAAY) traverse the membrane as a helical segment. Position 78 (Ala-78) is a topological domain, extracellular. The chain crosses the membrane as a helical span at residues 79 to 99 (FAPATLVTPLGALSVLVSAIL). Residues 100–107 (SSYFLNER) lie on the Cytoplasmic side of the membrane. The chain crosses the membrane as a helical span at residues 108–128 (LNLHGKIGCLLSILGSTVMVI). Residues 129-149 (HAPKEEEIETLNEMSHKLGDP) lie on the Extracellular side of the membrane. A helical transmembrane segment spans residues 150–170 (GFVVFATFVVIVALIFIFVVG). Residues 171–175 (PRHGQ) are Cytoplasmic-facing. The helical transmembrane segment at 176–196 (TNILVYITICSVIGAFSVSCV) threads the bilayer. Residues 197–215 (KGLGIAIKELLAGKPVLQH) lie on the Extracellular side of the membrane. Residues 216 to 236 (PLAWILLFSLVVCVSTQINYL) form a helical membrane-spanning segment. Residues 237 to 246 (NRALDIFNTS) lie on the Cytoplasmic side of the membrane. The helical transmembrane segment at 247–267 (IVTPIYYVFFTTSVLTCSAIL) threads the bilayer. Over 268-278 (FKEWQDMPVDD) the chain is Extracellular. The chain crosses the membrane as a helical span at residues 279–299 (VIGTLSGFFTIIVGIFLLHAF). Over 300–359 (KDVSFSLASLPVSFRKDEKAMNGNLSSMYEVLNNNEDDLPCGIEHTGENISRRNGNLPSF) the chain is Cytoplasmic.

This sequence belongs to the NIPA family. Widely expressed. Expressed at high levels in the kidney.

Its subcellular location is the cell membrane. The protein resides in the early endosome. It carries out the reaction Mg(2+)(in) = Mg(2+)(out). Acts as a selective Mg(2+) transporter. This is Magnesium transporter NIPA2 (Nipa2) from Mus musculus (Mouse).